Reading from the N-terminus, the 1386-residue chain is DNA-directed RNA polymerase subunit beta (1386 aa).

It belongs to the RNA polymerase beta chain family. As to quaternary structure, in plastids the minimal PEP RNA polymerase catalytic core is composed of four subunits: alpha, beta, beta', and beta''. When a (nuclear-encoded) sigma factor is associated with the core the holoenzyme is formed, which can initiate transcription.

The protein resides in the plastid. The protein localises to the chloroplast. It catalyses the reaction RNA(n) + a ribonucleoside 5'-triphosphate = RNA(n+1) + diphosphate. In terms of biological role, DNA-dependent RNA polymerase catalyzes the transcription of DNA into RNA using the four ribonucleoside triphosphates as substrates. The polypeptide is DNA-directed RNA polymerase subunit beta (Thalassiosira pseudonana (Marine diatom)).